Reading from the N-terminus, the 281-residue chain is Large ribosomal subunit protein uL2 (281 aa).

Residues 224-281 form a disordered region; it reads RGSAMNPNDHPHGGGEGHQPIGRKSPMTPWGKKALGVKTRKTKKASNQFIIRRRKESK.

It belongs to the universal ribosomal protein uL2 family. Part of the 50S ribosomal subunit. Forms a bridge to the 30S subunit in the 70S ribosome.

In terms of biological role, one of the primary rRNA binding proteins. Required for association of the 30S and 50S subunits to form the 70S ribosome, for tRNA binding and peptide bond formation. It has been suggested to have peptidyltransferase activity; this is somewhat controversial. Makes several contacts with the 16S rRNA in the 70S ribosome. This Metamycoplasma arthritidis (strain 158L3-1) (Mycoplasma arthritidis) protein is Large ribosomal subunit protein uL2.